A 455-amino-acid chain; its full sequence is Bifunctional protein GlmU (455 aa).

The interval 1–229 (MSKKVMSVVI…LNEIEGINDG (229 aa)) is pyrophosphorylase. Residues 11-14 (LAAG), Lys25, Gln76, 81-82 (GT), 103-105 (YGD), Gly140, Glu154, Asn169, and Asn227 contribute to the UDP-N-acetyl-alpha-D-glucosamine site. Position 105 (Asp105) interacts with Mg(2+). Asn227 contacts Mg(2+). The tract at residues 230-250 (LQLARLERLFQKQQAEKLLLS) is linker. The N-acetyltransferase stretch occupies residues 251 to 455 (GVRILDPARF…IQGWKRPKKT (205 aa)). Arg333 and Lys351 together coordinate UDP-N-acetyl-alpha-D-glucosamine. His363 serves as the catalytic Proton acceptor. Residues Tyr366 and Asn377 each contribute to the UDP-N-acetyl-alpha-D-glucosamine site. Acetyl-CoA-binding positions include Ala380, 386–387 (NY), Ser405, Ala423, and Arg440.

This sequence in the N-terminal section; belongs to the N-acetylglucosamine-1-phosphate uridyltransferase family. The protein in the C-terminal section; belongs to the transferase hexapeptide repeat family. Homotrimer. Mg(2+) serves as cofactor.

It localises to the cytoplasm. It carries out the reaction alpha-D-glucosamine 1-phosphate + acetyl-CoA = N-acetyl-alpha-D-glucosamine 1-phosphate + CoA + H(+). The catalysed reaction is N-acetyl-alpha-D-glucosamine 1-phosphate + UTP + H(+) = UDP-N-acetyl-alpha-D-glucosamine + diphosphate. Its pathway is nucleotide-sugar biosynthesis; UDP-N-acetyl-alpha-D-glucosamine biosynthesis; N-acetyl-alpha-D-glucosamine 1-phosphate from alpha-D-glucosamine 6-phosphate (route II): step 2/2. The protein operates within nucleotide-sugar biosynthesis; UDP-N-acetyl-alpha-D-glucosamine biosynthesis; UDP-N-acetyl-alpha-D-glucosamine from N-acetyl-alpha-D-glucosamine 1-phosphate: step 1/1. It functions in the pathway bacterial outer membrane biogenesis; LPS lipid A biosynthesis. Functionally, catalyzes the last two sequential reactions in the de novo biosynthetic pathway for UDP-N-acetylglucosamine (UDP-GlcNAc). The C-terminal domain catalyzes the transfer of acetyl group from acetyl coenzyme A to glucosamine-1-phosphate (GlcN-1-P) to produce N-acetylglucosamine-1-phosphate (GlcNAc-1-P), which is converted into UDP-GlcNAc by the transfer of uridine 5-monophosphate (from uridine 5-triphosphate), a reaction catalyzed by the N-terminal domain. This Hamiltonella defensa subsp. Acyrthosiphon pisum (strain 5AT) protein is Bifunctional protein GlmU.